A 465-amino-acid chain; its full sequence is Probable glucan endo-1,3-beta-glucosidase eglC (465 aa).

The signal sequence occupies residues 1-19 (MFTKTQILALALSIASAEA). Glutamate 128 functions as the Proton donor in the catalytic mechanism. Asparagine 183 carries an N-linked (GlcNAc...) asparagine glycan. The active-site Nucleophile is the glutamate 239. A glycan (N-linked (GlcNAc...) asparagine) is linked at asparagine 318. 2 stretches are compositionally biased toward low complexity: residues 320–333 (SSAS…SAQS) and 380–438 (SPSA…ATPA). Disordered regions lie at residues 320-356 (SSAS…GHGG) and 380-440 (SPSA…PADF). Glycine 442 is lipidated: GPI-anchor amidated glycine. A propeptide spans 443–465 (AGSRLSGSIFGAAMLVAALAVAL) (removed in mature form).

It belongs to the glycosyl hydrolase 17 family. The GPI-anchor is attached to the protein in the endoplasmic reticulum and serves to target the protein to the cell surface. There, the glucosamine-inositol phospholipid moiety is cleaved off and the GPI-modified mannoprotein is covalently attached via its lipidless GPI glycan remnant to the 1,6-beta-glucan of the outer cell wall layer.

It localises to the cell membrane. The protein resides in the secreted. The protein localises to the cell wall. The catalysed reaction is Hydrolysis of (1-&gt;3)-beta-D-glucosidic linkages in (1-&gt;3)-beta-D-glucans.. Functionally, glucanases play a role in cell expansion during growth, in cell-cell fusion during mating, and in spore release during sporulation. This enzyme may be involved in beta-glucan degradation and also function biosynthetically as a transglycosylase. This chain is Probable glucan endo-1,3-beta-glucosidase eglC (eglC), found in Emericella nidulans (strain FGSC A4 / ATCC 38163 / CBS 112.46 / NRRL 194 / M139) (Aspergillus nidulans).